The primary structure comprises 341 residues: L-threonine 3-dehydrogenase (341 aa).

Residue cysteine 38 coordinates Zn(2+). Catalysis depends on charge relay system residues threonine 40 and histidine 43. Zn(2+) is bound by residues histidine 63, glutamate 64, cysteine 93, cysteine 96, cysteine 99, and cysteine 107. NAD(+) is bound by residues isoleucine 175, aspartate 195, arginine 200, 262-264, and 286-287; these read LGI and IY.

Belongs to the zinc-containing alcohol dehydrogenase family. In terms of assembly, homotetramer. Requires Zn(2+) as cofactor.

Its subcellular location is the cytoplasm. The enzyme catalyses L-threonine + NAD(+) = (2S)-2-amino-3-oxobutanoate + NADH + H(+). The protein operates within amino-acid degradation; L-threonine degradation via oxydo-reductase pathway; glycine from L-threonine: step 1/2. Functionally, catalyzes the NAD(+)-dependent oxidation of L-threonine to 2-amino-3-ketobutyrate. This Yersinia pestis bv. Antiqua (strain Antiqua) protein is L-threonine 3-dehydrogenase.